Here is a 315-residue protein sequence, read N- to C-terminus: 4-hydroxy-3-methylbut-2-enyl diphosphate reductase (315 aa).

Cysteine 12 lines the [4Fe-4S] cluster pocket. Positions 41 and 74 each coordinate (2E)-4-hydroxy-3-methylbut-2-enyl diphosphate. Dimethylallyl diphosphate is bound by residues histidine 41 and histidine 74. Isopentenyl diphosphate contacts are provided by histidine 41 and histidine 74. [4Fe-4S] cluster is bound at residue cysteine 96. Residue histidine 124 coordinates (2E)-4-hydroxy-3-methylbut-2-enyl diphosphate. Residue histidine 124 participates in dimethylallyl diphosphate binding. Residue histidine 124 participates in isopentenyl diphosphate binding. Glutamate 126 functions as the Proton donor in the catalytic mechanism. Residue threonine 168 coordinates (2E)-4-hydroxy-3-methylbut-2-enyl diphosphate. Cysteine 198 provides a ligand contact to [4Fe-4S] cluster. 4 residues coordinate (2E)-4-hydroxy-3-methylbut-2-enyl diphosphate: serine 226, serine 227, asparagine 228, and serine 270. Dimethylallyl diphosphate-binding residues include serine 226, serine 227, asparagine 228, and serine 270. Positions 226, 227, 228, and 270 each coordinate isopentenyl diphosphate.

The protein belongs to the IspH family. [4Fe-4S] cluster is required as a cofactor.

The enzyme catalyses isopentenyl diphosphate + 2 oxidized [2Fe-2S]-[ferredoxin] + H2O = (2E)-4-hydroxy-3-methylbut-2-enyl diphosphate + 2 reduced [2Fe-2S]-[ferredoxin] + 2 H(+). The catalysed reaction is dimethylallyl diphosphate + 2 oxidized [2Fe-2S]-[ferredoxin] + H2O = (2E)-4-hydroxy-3-methylbut-2-enyl diphosphate + 2 reduced [2Fe-2S]-[ferredoxin] + 2 H(+). It participates in isoprenoid biosynthesis; dimethylallyl diphosphate biosynthesis; dimethylallyl diphosphate from (2E)-4-hydroxy-3-methylbutenyl diphosphate: step 1/1. Its pathway is isoprenoid biosynthesis; isopentenyl diphosphate biosynthesis via DXP pathway; isopentenyl diphosphate from 1-deoxy-D-xylulose 5-phosphate: step 6/6. Functionally, catalyzes the conversion of 1-hydroxy-2-methyl-2-(E)-butenyl 4-diphosphate (HMBPP) into a mixture of isopentenyl diphosphate (IPP) and dimethylallyl diphosphate (DMAPP). Acts in the terminal step of the DOXP/MEP pathway for isoprenoid precursor biosynthesis. This chain is 4-hydroxy-3-methylbut-2-enyl diphosphate reductase, found in Pseudomonas entomophila (strain L48).